Consider the following 134-residue polypeptide: Small ribosomal subunit protein uS11 (134 aa).

Belongs to the universal ribosomal protein uS11 family. In terms of assembly, part of the 30S ribosomal subunit. Interacts with proteins S7 and S18. Binds to IF-3.

Functionally, located on the platform of the 30S subunit, it bridges several disparate RNA helices of the 16S rRNA. Forms part of the Shine-Dalgarno cleft in the 70S ribosome. In Delftia acidovorans (strain DSM 14801 / SPH-1), this protein is Small ribosomal subunit protein uS11.